Consider the following 396-residue polypeptide: MAKEKFERNKPHVNVGTIGHVDHGKTTLTAALTRVCAEVWGGNAVAFDGIDNAPEERERGITIATSHVEYDSPTRHYAHVDCPGHADYVKNMITGAAQMDGAILVCSAADGPMPQTREHILLSRQVGVPYIVVFLNKADMVDDEELLELVEMEVRELLSDYDFPGDDTPIIKGSALKALEGDTSDIGMPAVQKLVETLDEYIPEPERAVDQPFLMPIEDVFSISGRGTVVTGRVERGIVKVGEEIEIVGIHDTTKTTCTGVEMFRKLLDEGRAGENVGVLLRGTKRDEVERGQVLAKPGSINPHTKFVAEVYVLSKDEGGRHTPFFNGYRPQFYFRTTDVTGACTLPEGTEMVMPGDNVQMDVELIAPIAMEDGLRFAIREGGRTVGAGVVAKITE.

Positions 10 to 206 (KPHVNVGTIG…TLDEYIPEPE (197 aa)) constitute a tr-type G domain. Positions 19–26 (GHVDHGKT) are G1. 19 to 26 (GHVDHGKT) contacts GTP. Position 26 (Thr26) interacts with Mg(2+). The tract at residues 60-64 (GITIA) is G2. A G3 region spans residues 81–84 (DCPG). GTP is bound by residues 81–85 (DCPGH) and 136–139 (NKAD). The G4 stretch occupies residues 136–139 (NKAD). Residues 174-176 (SAL) are G5.

This sequence belongs to the TRAFAC class translation factor GTPase superfamily. Classic translation factor GTPase family. EF-Tu/EF-1A subfamily. As to quaternary structure, monomer.

Its subcellular location is the cytoplasm. It catalyses the reaction GTP + H2O = GDP + phosphate + H(+). Functionally, GTP hydrolase that promotes the GTP-dependent binding of aminoacyl-tRNA to the A-site of ribosomes during protein biosynthesis. This Alcanivorax borkumensis (strain ATCC 700651 / DSM 11573 / NCIMB 13689 / SK2) protein is Elongation factor Tu.